The following is a 395-amino-acid chain: Elongation factor Tu (395 aa).

The region spanning 10–204 (KPHVNIGTIG…EVDAYIPTPE (195 aa)) is the tr-type G domain. The G1 stretch occupies residues 19-26 (GHVDHGKT). Residue 19–26 (GHVDHGKT) participates in GTP binding. T26 lines the Mg(2+) pocket. The tract at residues 60–64 (GITIS) is G2. Residues 81-84 (DCPG) form a G3 region. GTP-binding positions include 81-85 (DCPGH) and 136-139 (NKCD). A G4 region spans residues 136–139 (NKCD). The segment at 174 to 176 (SAL) is G5.

It belongs to the TRAFAC class translation factor GTPase superfamily. Classic translation factor GTPase family. EF-Tu/EF-1A subfamily. In terms of assembly, monomer.

Its subcellular location is the cytoplasm. The catalysed reaction is GTP + H2O = GDP + phosphate + H(+). GTP hydrolase that promotes the GTP-dependent binding of aminoacyl-tRNA to the A-site of ribosomes during protein biosynthesis. The chain is Elongation factor Tu from Bacillus anthracis (strain A0248).